A 523-amino-acid chain; its full sequence is Excitatory amino acid transporter 3 (523 aa).

Residues 1–18 (MGKPTSSGCDWRRFLRNH) lie on the Cytoplasmic side of the membrane. Residues 19–38 (WLLLSTVAAVVLGIVLGVVV) form a helical membrane-spanning segment. Residues 39 to 61 (RGHSELSNLDKFYFAFPGEILMR) are Extracellular-facing. The helical transmembrane segment at 62–82 (MLKLVILPLIVSSMITGVAAL) threads the bilayer. The Cytoplasmic segment spans residues 83 to 93 (DSNVSGKIGLR). Residues 94 to 114 (AVVYYFSTTVIAVILGIVLVV) form a helical membrane-spanning segment. Y98, T101, and T102 together coordinate Na(+). Residues 115 to 204 (SIKPGVTQKV…KTKEYKIVGL (90 aa)) lie on the Extracellular side of the membrane. N128, N178, and N194 each carry an N-linked (GlcNAc...) asparagine glycan. A helical transmembrane segment spans residues 205–228 (YSDGINVLGLIIFCLVFGLVIGKM). Residues 229-237 (GEKGQILVD) are Cytoplasmic-facing. Residues 238–265 (FFNALSDATMKIVQIIMCYMPIGILFLI) traverse the membrane as a helical segment. Residues 266–285 (AGKIIEVEDWEIFRKLGLYM) are Extracellular-facing. A helical membrane pass occupies residues 286-307 (ATVLSGLAIHSLIVLPLLYFIV). Residues 308 to 312 (VRKNP) are Cytoplasmic-facing. An intramembrane region (discontinuously helical) is located at residues 313–343 (FRFALGMAQALLTALMISSSSATLPVTFRCA). Residues S330 and S332 each coordinate L-aspartate. The Cytoplasmic segment spans residues 344-352 (EEKNQVDKR). A helical membrane pass occupies residues 353–379 (ITRFVLPVGATINMDGTALYEAVAAVF). Positions 361, 363, 365, and 367 each coordinate Na(+). T369 contacts L-aspartate. At 380 to 392 (IAQLNGLDLSIGQ) the chain is on the extracellular side. The segment at residues 393–426 (IVTISITATAASIGAAGVPQAGLVTMVIVLSAVG) is an intramembrane region (discontinuously helical). 3 residues coordinate Na(+): S404, I405, and A407. V410 lines the L-aspartate pocket. The Extracellular portion of the chain corresponds to 427-439 (LPAEDVTLIIAVD). A helical transmembrane segment spans residues 440-461 (WLLDRFRTMVNVLGDAFGTGIV). Positions 446, 447, and 450 each coordinate L-aspartate. N450 and D454 together coordinate Na(+). Topologically, residues 462–523 (EKLSKKELEQ…TISFTQTSQF (62 aa)) are cytoplasmic. Residues S516 and S521 each carry the phosphoserine modification.

Belongs to the dicarboxylate/amino acid:cation symporter (DAACS) (TC 2.A.23) family. SLC1A1 subfamily. As to quaternary structure, homotrimer. Interacts with ARL6IP5. Interacts with RTN2 (via N-terminus); the interaction promotes cell surface expression of SLC1A1. Interacts with SORCS2; this interaction is important for normal expression at the cell membrane. As to expression, detected on neurons in the brain cortex, dentate gyrus and hippocampus CA2 region (at protein level). Expressed in whole brain, brain cortex, hippocampus, cerebellum, lung, kidney, small intestine and skeletal muscle. Expressed in the renal outer medulla, medullary ray and cortex (at protein level).

It localises to the cell membrane. The protein resides in the apical cell membrane. It is found in the synapse. The protein localises to the synaptosome. Its subcellular location is the early endosome membrane. It localises to the late endosome membrane. The protein resides in the recycling endosome membrane. The enzyme catalyses K(+)(in) + L-glutamate(out) + 3 Na(+)(out) + H(+)(out) = K(+)(out) + L-glutamate(in) + 3 Na(+)(in) + H(+)(in). It carries out the reaction K(+)(in) + L-aspartate(out) + 3 Na(+)(out) + H(+)(out) = K(+)(out) + L-aspartate(in) + 3 Na(+)(in) + H(+)(in). It catalyses the reaction D-aspartate(out) + K(+)(in) + 3 Na(+)(out) + H(+)(out) = D-aspartate(in) + K(+)(out) + 3 Na(+)(in) + H(+)(in). The catalysed reaction is K(+)(in) + L-cysteine(out) + 3 Na(+)(out) + H(+)(out) = K(+)(out) + L-cysteine(in) + 3 Na(+)(in) + H(+)(in). Its function is as follows. Sodium-dependent, high-affinity amino acid transporter that mediates the uptake of L-glutamate and also L-aspartate and D-aspartate. Can also transport L-cysteine. Functions as a symporter that transports one amino acid molecule together with two or three Na(+) ions and one proton, in parallel with the counter-transport of one K(+) ion. Mediates Cl(-) flux that is not coupled to amino acid transport; this avoids the accumulation of negative charges due to aspartate and Na(+) symport. Plays an important role in L-glutamate and L-aspartate reabsorption in renal tubuli. Plays a redundant role in the rapid removal of released glutamate from the synaptic cleft, which is essential for terminating the postsynaptic action of glutamate. Contributes to glutathione biosynthesis and protection against oxidative stress via its role in L-glutamate and L-cysteine transport. Negatively regulated by ARL6IP5. The polypeptide is Excitatory amino acid transporter 3 (Slc1a1) (Mus musculus (Mouse)).